The following is a 315-amino-acid chain: Ribosomal RNA small subunit methyltransferase H (315 aa).

Residues 37–39, Asp57, Phe83, Asp105, and Gln112 contribute to the S-adenosyl-L-methionine site; that span reads GGH.

Belongs to the methyltransferase superfamily. RsmH family.

The protein resides in the cytoplasm. The catalysed reaction is cytidine(1402) in 16S rRNA + S-adenosyl-L-methionine = N(4)-methylcytidine(1402) in 16S rRNA + S-adenosyl-L-homocysteine + H(+). In terms of biological role, specifically methylates the N4 position of cytidine in position 1402 (C1402) of 16S rRNA. The polypeptide is Ribosomal RNA small subunit methyltransferase H (Pseudomonas fluorescens (strain ATCC BAA-477 / NRRL B-23932 / Pf-5)).